The sequence spans 286 residues: 2-hydroxy-6-oxo-6-phenylhexa-2,4-dienoate hydrolase (286 aa).

Substrate-binding positions include 42 to 43, Asn51, Asn111, Ser180, and Arg190; that span reads GG. His265 acts as the Proton acceptor in catalysis. Trp266 lines the substrate pocket.

The protein belongs to the AB hydrolase superfamily. BphD family. As to quaternary structure, homodimer.

It catalyses the reaction 2,6-dioxo-6-phenylhexa-3-enoate + H2O = 2-oxopent-4-enoate + benzoate + H(+). It functions in the pathway xenobiotic degradation; biphenyl degradation; 2-hydroxy-2,4-pentadienoate and benzoate from biphenyl: step 4/4. With respect to regulation, inhibited by 3-Cl HOPDA. In terms of biological role, catalyzes an unusual C-C bond hydrolysis of 2-hydroxy-6-oxo-6-phenylhexa-2,4-dienoic acid (HOPDA) to produce benzoic acid and 2-hydroxy-2,4-pentadienoic acid (HPD). This chain is 2-hydroxy-6-oxo-6-phenylhexa-2,4-dienoate hydrolase (bphD), found in Paraburkholderia xenovorans (strain LB400).